The chain runs to 555 residues: MNGNGTADKPGPPGGKPFGPGMGPPIQYPTGFKLYSIMTGLYLASFLTALDRTVLVVAIPQITDHFNSIDDIGWYGSAYLLTFCAFQLLFGKIYSFYNPKWVFLSAVLIFEIGSAICGAAPNSTALIIGRAIAGLGSSGIFGGSVIITFFTVPLHQRPIYTGIAGVIFALASSVGPLIGGGFTNNVSWRWCFYINLPVGALTVVTILLFLNLPPARKAGTPLREQLLQMDPLGNLCLIPGIICLLLAIQWGGSTYAWSNGRIVALLVLAGVLLIAFVGVQLWLQDKGTIPPRVMKQRSIAAGMAFTICVTAGFMSFNYYLPIWFQAIKNASSFHSGVMMLPTVISSGVASLACGFIIHRVGYYTPFMIGGSVLMAIGAGLLTTFTPTTEHPKWIGYQVLWALGCGMSMQQASLAAQTVLPKPDAPIGISLIFFSQSLGGSVFLAVDDSIYSNRLAAKLGSIPNLPQSALTNTGATNIRNLVAPQYLGRLLGGYNDALMDVFRVAVASSCACVVAAAFMEWKNVRAAKAAGPGGPGGPGGPGGPGGPEGLRGGNKV.

The disordered stretch occupies residues 1–20 (MNGNGTADKPGPPGGKPFGP). A glycan (N-linked (GlcNAc...) asparagine) is linked at N4. Transmembrane regions (helical) follow at residues 30–50 (TGFKLYSIMTGLYLASFLTAL), 71–91 (DIGWYGSAYLLTFCAFQLLFG), and 101–121 (WVFLSAVLIFEIGSAICGAAP). Residue N122 is glycosylated (N-linked (GlcNAc...) asparagine). Transmembrane regions (helical) follow at residues 132-152 (IAGLGSSGIFGGSVIITFFTV) and 162-182 (GIAGVIFALASSVGPLIGGGF). An N-linked (GlcNAc...) asparagine glycan is attached at N185. 4 consecutive transmembrane segments (helical) span residues 190-210 (WCFYINLPVGALTVVTILLFL), 232-252 (LGNLCLIPGIICLLLAIQWGG), 262-282 (IVALLVLAGVLLIAFVGVQLW), and 304-324 (AFTICVTAGFMSFNYYLPIWF). An N-linked (GlcNAc...) asparagine glycan is attached at N329. Transmembrane regions (helical) follow at residues 337-357 (VMMLPTVISSGVASLACGFII), 364-384 (TPFMIGGSVLMAIGAGLLTTF), 393-413 (WIGYQVLWALGCGMSMQQASL), 425-445 (PIGISLIFFSQSLGGSVFLAV), and 497-517 (LMDVFRVAVASSCACVVAAAF). The disordered stretch occupies residues 528 to 555 (AAGPGGPGGPGGPGGPGGPEGLRGGNKV). Over residues 530-555 (GPGGPGGPGGPGGPGGPEGLRGGNKV) the composition is skewed to gly residues.

The protein belongs to the major facilitator superfamily. TCR/Tet family.

The protein resides in the endoplasmic reticulum membrane. MFS-type transporter; part of the gene cluster that mediates the biosynthesis of viriditoxin, one of the 'classical' secondary metabolites produced by fungi and that has antibacterial activity. Is not essential for viriditoxin production. The polypeptide is MFS-type transporter VdtG (Byssochlamys spectabilis (Paecilomyces variotii)).